The sequence spans 241 residues: Octanoyltransferase (241 aa).

One can recognise a BPL/LPL catalytic domain in the interval 38 to 227 (AGGPDTLLLL…AVCNALDGAL (190 aa)). Substrate is bound by residues 85-92 (RGGKITWH), 157-159 (AIG), and 170-172 (GFA). Residue C188 is the Acyl-thioester intermediate of the active site.

It belongs to the LipB family.

The protein resides in the cytoplasm. It catalyses the reaction octanoyl-[ACP] + L-lysyl-[protein] = N(6)-octanoyl-L-lysyl-[protein] + holo-[ACP] + H(+). The protein operates within protein modification; protein lipoylation via endogenous pathway; protein N(6)-(lipoyl)lysine from octanoyl-[acyl-carrier-protein]: step 1/2. Catalyzes the transfer of endogenously produced octanoic acid from octanoyl-acyl-carrier-protein onto the lipoyl domains of lipoate-dependent enzymes. Lipoyl-ACP can also act as a substrate although octanoyl-ACP is likely to be the physiological substrate. This chain is Octanoyltransferase, found in Mycobacterium marinum (strain ATCC BAA-535 / M).